The following is an 880-amino-acid chain: Vacuole morphology and inheritance protein 14 (880 aa).

HEAT repeat units lie at residues 82–119 and 243–280; these read RYLRNILPPVLACFGDQNDQVRFYACESLYNIAKIAKG and SYLPSFLGGLFTFLGDSHKDVRTVTHTLMDSLLHEVDR. The segment at 333 to 373 is disordered; that stretch reads SKPLSMETDDTKLSNTNETDDERHLTSQEQLLDSEATSQEP. Positions 359–372 are enriched in polar residues; it reads SQEQLLDSEATSQE. 3 HEAT repeats span residues 388 to 425, 429 to 466, and 517 to 554; these read LNFPEVITVLVNNLASSEAEIQLIALHWIQVILSISPN, PFLSKILSVLLKLLSDSDPHITEIAQLVNGQLLSLCSS, and KHNDSMFLTLLKSLSNRDSVLIEKALSLLQSLCSDSND. 3 positions are modified to phosphoserine: Ser767, Ser805, and Ser867. Residues 850 to 880 are disordered; sequence EMESPNDNSSVILKDSGSLPFNRNVSDKLKK.

The protein belongs to the VAC14 family. In terms of assembly, component of the PI(3,5)P2 regulatory complex, composed of ATG18, FIG4, FAB1, VAC14 and VAC7. VAC14 nucleates the assembly of the complex and serves as a scaffold.

It localises to the vacuole membrane. Its function is as follows. The PI(3,5)P2 regulatory complex regulates both the synthesis and turnover of phosphatidylinositol 3,5-bisphosphate (PtdIns(3,5)P2). Regulates the synthesis of PtdIns(3,5)P2 by positive activation of FAB1 and by controlling FIG4 localization. Required for FIG4-mediated turnover of PtdIns(3,5)P2 after hyperosmotic shock. Essential for the control of trafficking of some proteins to the vacuole lumen via the multivesicular body (MVB), and for maintenance of vacuole size and acidity. The protein is Vacuole morphology and inheritance protein 14 (VAC14) of Saccharomyces cerevisiae (strain ATCC 204508 / S288c) (Baker's yeast).